A 3413-amino-acid chain; its full sequence is Protein pecanex (3413 aa).

Transmembrane regions (helical) follow at residues 33–53 (VVHL…YLYF) and 57–77 (WLTW…VKLA). Residue asparagine 164 is glycosylated (N-linked (GlcNAc...) asparagine). Over residues 182 to 195 (GSQQDQQSLAGSAS) the composition is skewed to low complexity. Disordered regions lie at residues 182-213 (GSQQ…STSA) and 235-314 (GSSA…ENKL). The segment covering 196-213 (VSKSIRSTGPGGNSSTSA) has biased composition (polar residues). N-linked (GlcNAc...) asparagine glycosylation is present at asparagine 208. Over residues 302-312 (AAAAANSNAEN) the composition is skewed to low complexity. Asparagine 317 is a glycosylation site (N-linked (GlcNAc...) asparagine). 4 disordered regions span residues 327–363 (PSFL…GDAP), 379–403 (LVNP…RLKH), 540–609 (PGTG…GTGG), and 625–651 (PSVS…NPLP). The span at 330–354 (LHSQPTNKARGQTNPRQHFITSAPS) shows a compositional bias: polar residues. Over residues 392–402 (RSSETHDERLK) the composition is skewed to basic and acidic residues. Positions 541–559 (GTGGSVTGGGGAAGGGGSA) are enriched in gly residues. N-linked (GlcNAc...) asparagine glycosylation is found at asparagine 569 and asparagine 581. The segment covering 569-582 (NATSYKHGSSQSNK) has biased composition (polar residues). Gly residues predominate over residues 599–609 (GTSGGAGGTGG). Positions 625–634 (PSVSNLSPHP) are enriched in polar residues. The N-linked (GlcNAc...) asparagine glycan is linked to asparagine 685. Over residues 720-730 (EKTAHEEHGDD) the composition is skewed to basic and acidic residues. 4 disordered regions span residues 720 to 745 (EKTA…DDEV), 816 to 873 (HHHS…NRQP), 886 to 921 (RQEL…DCEQ), and 1002 to 1021 (KQTK…HSIS). The segment covering 816–826 (HHHSHLHHHKA) has biased composition (basic residues). A compositionally biased stretch (low complexity) spans 828–846 (SVEGAGPSGGSVAVGVSAG). Over residues 847-856 (NDDEDEETED) the composition is skewed to acidic residues. An N-linked (GlcNAc...) asparagine glycan is attached at asparagine 857. Residues 1008–1021 (SRNSSSSNSTHSIS) show a composition bias toward low complexity. Asparagine 1010, asparagine 1015, asparagine 1069, and asparagine 1199 each carry an N-linked (GlcNAc...) asparagine glycan. The next 2 helical transmembrane spans lie at 1315 to 1335 (MHVL…AAIL) and 1343 to 1363 (LCAL…VKSV). A glycan (N-linked (GlcNAc...) asparagine) is linked at asparagine 1375. 4 consecutive transmembrane segments (helical) span residues 1376–1396 (KTVA…LLLL), 1423–1443 (VVAL…IIFS), 1474–1494 (LLGS…LYGP), and 1504–1524 (GTQY…GYHL). The N-linked (GlcNAc...) asparagine glycan is linked to asparagine 1572. Disordered stretches follow at residues 1577–1675 (QLTT…TGEP), 1722–1744 (DKIS…GAGT), and 1760–1813 (AEAE…LPDP). Composition is skewed to basic and acidic residues over residues 1587 to 1598 (RQTDVKTEHEQI) and 1607 to 1620 (TVNE…HGAD). A compositionally biased stretch (low complexity) spans 1639-1666 (KTSSLGSSQQTLGKTISSSKRAITASSS). Over residues 1725–1738 (SSSSATNPGDMSTL) the composition is skewed to polar residues. Tandem repeats lie at residues 1776 to 1777 (GT), 1778 to 1779 (GT), 1780 to 1781 (GT), 1782 to 1783 (GT), and 1784 to 1785 (GT). The interval 1776 to 1785 (GTGTGTGTGT) is 5 X 2 AA tandem repeats of G-T. Asparagine 1791 and asparagine 1804 each carry an N-linked (GlcNAc...) asparagine glycan. The segment covering 1799–1808 (GNTNSNGTGN) has biased composition (low complexity). 5 helical membrane passes run 1830–1850 (LVVM…TVFT), 1856–1876 (LNVV…YIVP), 1914–1934 (LYIY…AISS), 1940–1960 (QLIV…ICAL), and 1976–1996 (IIIF…ETFI). The segment at 2344 to 2463 (SMGGAPPAQA…HSFANISRQT (120 aa)) is disordered. The span at 2346–2370 (GGAPPAQAPAAAGGASSAPATAGVA) shows a compositional bias: low complexity. Residues asparagine 2380 and asparagine 2387 are each glycosylated (N-linked (GlcNAc...) asparagine). Residues 2389 to 2411 (SAHGGQAGPSSGQSKSQSQQQLR) are compositionally biased toward low complexity. Gly residues predominate over residues 2437-2447 (GTGGVTGGGGD). Residues 2449–2463 (QLSSSHSFANISRQT) show a composition bias toward polar residues. Asparagine 2458, asparagine 2619, and asparagine 2717 each carry an N-linked (GlcNAc...) asparagine glycan. 2 disordered regions span residues 2908 to 2997 (LNRE…SSGS) and 3198 to 3242 (ESST…GDDG). Positions 2940–2956 (RRPEVGSSRGRDHERRA) are enriched in basic and acidic residues. N-linked (GlcNAc...) asparagine glycosylation is present at asparagine 3246. The interval 3295–3413 (AEESKEKGTA…NGESEAGTTV (119 aa)) is disordered. Residues 3310–3323 (EGEEGVGEMEIEPE) show a composition bias toward acidic residues. A compositionally biased stretch (low complexity) spans 3364–3377 (TSSTSSAKSTSSPS). Acidic residues predominate over residues 3380-3406 (QEEEDAVDPEETPELASEESPSDENGE).

It belongs to the pecanex family.

The protein localises to the membrane. In terms of biological role, involved in neurogenesis. In Drosophila melanogaster (Fruit fly), this protein is Protein pecanex (pcx).